A 206-amino-acid chain; its full sequence is Pyrrolidone-carboxylate peptidase (206 aa).

Active-site residues include Glu76, Cys139, and His163.

It belongs to the peptidase C15 family. In terms of assembly, homotetramer.

Its subcellular location is the cytoplasm. It catalyses the reaction Release of an N-terminal pyroglutamyl group from a polypeptide, the second amino acid generally not being Pro.. Removes 5-oxoproline from various penultimate amino acid residues except L-proline. This is Pyrrolidone-carboxylate peptidase (pcp) from Pyrococcus horikoshii (strain ATCC 700860 / DSM 12428 / JCM 9974 / NBRC 100139 / OT-3).